A 98-amino-acid polypeptide reads, in one-letter code: NADH-ubiquinone oxidoreductase chain 4L (98 aa).

Helical transmembrane passes span 1–21 (MSLI…GLLM), 29–49 (ALLC…LTIL), and 61–81 (IILL…LVMI).

It belongs to the complex I subunit 4L family. In terms of assembly, core subunit of respiratory chain NADH dehydrogenase (Complex I) which is composed of 45 different subunits.

The protein resides in the mitochondrion inner membrane. The catalysed reaction is a ubiquinone + NADH + 5 H(+)(in) = a ubiquinol + NAD(+) + 4 H(+)(out). Functionally, core subunit of the mitochondrial membrane respiratory chain NADH dehydrogenase (Complex I) which catalyzes electron transfer from NADH through the respiratory chain, using ubiquinone as an electron acceptor. Part of the enzyme membrane arm which is embedded in the lipid bilayer and involved in proton translocation. The sequence is that of NADH-ubiquinone oxidoreductase chain 4L (MT-ND4L) from Platanista minor (Indus river dolphin).